Reading from the N-terminus, the 756-residue chain is 5-methyltetrahydropteroyltriglutamate--homocysteine methyltransferase (756 aa).

Residues 15 to 18 and lysine 111 contribute to the 5-methyltetrahydropteroyltri-L-glutamate site; that span reads REWK. The interval 392–411 is disordered; the sequence is GAATSHNLENKKRPQSFNER. A compositionally biased stretch (basic and acidic residues) spans 399–411; that stretch reads LENKKRPQSFNER. Residues 429 to 431 and glutamate 482 each bind L-homocysteine; that span reads IGS. Residues 429–431 and glutamate 482 each bind L-methionine; that span reads IGS. 5-methyltetrahydropteroyltri-L-glutamate contacts are provided by residues 513–514 and tryptophan 559; that span reads RC. Residue aspartate 597 coordinates L-homocysteine. Aspartate 597 contacts L-methionine. Glutamate 603 is a 5-methyltetrahydropteroyltri-L-glutamate binding site. Zn(2+) contacts are provided by histidine 639, cysteine 641, and glutamate 663. Histidine 692 (proton donor) is an active-site residue. Cysteine 724 contacts Zn(2+).

This sequence belongs to the vitamin-B12 independent methionine synthase family. It depends on Zn(2+) as a cofactor.

It catalyses the reaction 5-methyltetrahydropteroyltri-L-glutamate + L-homocysteine = tetrahydropteroyltri-L-glutamate + L-methionine. It participates in amino-acid biosynthesis; L-methionine biosynthesis via de novo pathway; L-methionine from L-homocysteine (MetE route): step 1/1. In terms of biological role, catalyzes the transfer of a methyl group from 5-methyltetrahydrofolate to homocysteine resulting in methionine formation. This Halalkalibacterium halodurans (strain ATCC BAA-125 / DSM 18197 / FERM 7344 / JCM 9153 / C-125) (Bacillus halodurans) protein is 5-methyltetrahydropteroyltriglutamate--homocysteine methyltransferase.